The following is a 455-amino-acid chain: UDP-N-acetylmuramoylalanine--D-glutamate ligase (455 aa).

118–124 is a binding site for ATP; it reads GTNGKST.

Belongs to the MurCDEF family.

The protein localises to the cytoplasm. The catalysed reaction is UDP-N-acetyl-alpha-D-muramoyl-L-alanine + D-glutamate + ATP = UDP-N-acetyl-alpha-D-muramoyl-L-alanyl-D-glutamate + ADP + phosphate + H(+). Its pathway is cell wall biogenesis; peptidoglycan biosynthesis. Cell wall formation. Catalyzes the addition of glutamate to the nucleotide precursor UDP-N-acetylmuramoyl-L-alanine (UMA). In Myxococcus xanthus (strain DK1622), this protein is UDP-N-acetylmuramoylalanine--D-glutamate ligase.